The chain runs to 151 residues: Large ribosomal subunit protein uL23m (151 aa).

Over residues 120–143 the composition is skewed to basic and acidic residues; sequence DDKKSLEDAKKNHKKFLDKNKDRP. The tract at residues 120 to 151 is disordered; sequence DDKKSLEDAKKNHKKFLDKNKDRPGTPGWFSI.

It belongs to the universal ribosomal protein uL23 family. As to quaternary structure, component of the mitochondrial ribosome large subunit (39S) which comprises a 16S rRNA and about 50 distinct proteins.

The protein resides in the mitochondrion. The polypeptide is Large ribosomal subunit protein uL23m (mRpL23) (Anopheles gambiae (African malaria mosquito)).